The following is a 353-amino-acid chain: Phosphate acyltransferase (353 aa).

The protein belongs to the PlsX family. As to quaternary structure, homodimer. Probably interacts with PlsY.

The protein resides in the cytoplasm. It carries out the reaction a fatty acyl-[ACP] + phosphate = an acyl phosphate + holo-[ACP]. The protein operates within lipid metabolism; phospholipid metabolism. Functionally, catalyzes the reversible formation of acyl-phosphate (acyl-PO(4)) from acyl-[acyl-carrier-protein] (acyl-ACP). This enzyme utilizes acyl-ACP as fatty acyl donor, but not acyl-CoA. This chain is Phosphate acyltransferase, found in Ralstonia pickettii (strain 12J).